Here is a 419-residue protein sequence, read N- to C-terminus: Light-dependent chlorophyll f synthase (419 aa).

5 helical membrane passes run 73 to 90 (YIGWFGMLAIPTLATAAI), 162 to 177 (HFIIGIISYQDREWEL), 186 to 200 (WISLAFTAPVAASVS), 241 to 262 (LHQMGVIGVLGGALLCAVHGSL), and 323 to 337 (CLAALPVAGIWSAAI). His-162 is a binding site for a chlorophyll. His-242 is a binding site for a chlorophyll.

The protein belongs to the reaction center PufL/M/PsbA/D family. Homodimer.

It localises to the cellular thylakoid membrane. Synthesizes chlorophyll f or chlorophyllide f (Chl f, 2-formyl chlorophyll a), probably by oxidation of chlorophyll a or chlorophyllide a and reduction of plastoquinone. The reaction is probably light-dependent. Chl f absorbs far red light (FRL, 707 nm in 100% methanol), and is synthesized when cells are grown in FRL, where it provides the advantage of extending the spectral range of harvested light in terrestrial cyanobacteria. Chl f synthesis is probably light-dependent. In Synechococcus sp. (strain ATCC 29403 / PCC 7335), this protein is Light-dependent chlorophyll f synthase.